Reading from the N-terminus, the 580-residue chain is NADH-ubiquinone oxidoreductase chain 5 (580 aa).

The next 16 helical transmembrane spans lie at 12 to 32 (FYIL…FLLM), 50 to 70 (IVMT…VLLI), 92 to 112 (ILLV…PNLI), 113 to 133 (SILL…IYFQ), 153 to 173 (VALL…YIFY), 176 to 196 (MMKN…AAMT), 218 to 240 (SALV…FNIL), 249 to 269 (FLLL…NFEF), 274 to 294 (IIAL…SIGY), 300 to 320 (FHLL…GVII), 343 to 363 (CSCF…AGFY), 378 to 400 (NFFS…FRLV), 427 to 447 (IFFL…LMFF), 464 to 484 (MVCL…FFFI), 500 to 520 (MWFM…ILGM), and 560 to 580 (IYLL…LFLN).

The protein belongs to the complex I subunit 5 family.

It is found in the mitochondrion inner membrane. It catalyses the reaction a ubiquinone + NADH + 5 H(+)(in) = a ubiquinol + NAD(+) + 4 H(+)(out). Functionally, core subunit of the mitochondrial membrane respiratory chain NADH dehydrogenase (Complex I) that is believed to belong to the minimal assembly required for catalysis. Complex I functions in the transfer of electrons from NADH to the respiratory chain. The immediate electron acceptor for the enzyme is believed to be ubiquinone. The chain is NADH-ubiquinone oxidoreductase chain 5 from Aedes aegypti (Yellowfever mosquito).